The primary structure comprises 209 residues: Rac-like GTP-binding protein ARAC9 (209 aa).

25–32 (GDGAVGKT) contributes to the GTP binding site. Residues 47–55 (YVPTVFDNF) carry the Effector region motif. GTP is bound by residues 72–76 (DTAGQ) and 130–133 (TKSD). Cys206 is subject to Cysteine methyl ester. Residue Cys206 is the site of S-geranylgeranyl cysteine attachment. Residues 207–209 (HVL) constitute a propeptide, removed in mature form.

It belongs to the small GTPase superfamily. Rho family. In terms of assembly, interacts with SPK1.

It localises to the cytoplasm. The protein resides in the membrane. Functionally, inactive GDP-bound Rho GTPases reside in the cytosol, are found in a complex with Rho GDP-dissociation inhibitors (Rho GDIs), and are released from the GDI protein in order to translocate to membranes upon activation. This chain is Rac-like GTP-binding protein ARAC9 (ARAC9), found in Arabidopsis thaliana (Mouse-ear cress).